Consider the following 53-residue polypeptide: Large ribosomal subunit protein eL24 (53 aa).

Zn(2+) contacts are provided by Cys4, Cys7, Cys30, and Cys34. Residues 4–34 (CSFCHEEIEPGTGKMYVKRDGTIYFFCSSKC) form a C4-type zinc finger.

It belongs to the eukaryotic ribosomal protein eL24 family. Part of the 50S ribosomal subunit. Forms a cluster with proteins L3 and L14. Zn(2+) is required as a cofactor.

Functionally, binds to the 23S rRNA. The protein is Large ribosomal subunit protein eL24 of Methanothermobacter thermautotrophicus (strain ATCC 29096 / DSM 1053 / JCM 10044 / NBRC 100330 / Delta H) (Methanobacterium thermoautotrophicum).